A 330-amino-acid chain; its full sequence is tRNA-modifying protein YgfZ (330 aa).

2 residues coordinate folate: Trp28 and Trp192.

This sequence belongs to the tRNA-modifying YgfZ family.

The protein resides in the cytoplasm. Functionally, folate-binding protein involved in regulating the level of ATP-DnaA and in the modification of some tRNAs. It is probably a key factor in regulatory networks that act via tRNA modification, such as initiation of chromosomal replication. In Blochmanniella pennsylvanica (strain BPEN), this protein is tRNA-modifying protein YgfZ.